A 509-amino-acid polypeptide reads, in one-letter code: uncharacterized protein (509 aa).

The G domain maps to 108 to 225 (GKSSLCNLLA…KRHKPLFPVI (118 aa)).

This is an uncharacterized protein from Acinetobacter baylyi (strain ATCC 33305 / BD413 / ADP1).